Reading from the N-terminus, the 353-residue chain is UPF0283 membrane protein YcjF (353 aa).

The next 3 helical transmembrane spans lie at 70 to 90 (MVMGGLALFGASVVGQGVQWT), 100 to 120 (VALGGCAAGALIIGAGVGSVV), and 213 to 233 (ESTLMIAVSPLALVDMAFIAW).

This sequence belongs to the UPF0283 family.

It localises to the cell inner membrane. This Escherichia coli O139:H28 (strain E24377A / ETEC) protein is UPF0283 membrane protein YcjF.